Reading from the N-terminus, the 732-residue chain is Acetophenone carboxylase gamma subunit (732 aa).

Belongs to the HyuA family. As to quaternary structure, acetophenone carboxylase consists of five subunits; a heterooctameric subcomplex of two alpha (Apc1), two beta (Apc2), two gamma (Apc3) and two delta (Apc4) subunits assembles with the epsilon (Apc5) subunit in an unknown stoichiometry. Mg(2+) serves as cofactor. Mn(2+) is required as a cofactor.

The protein localises to the cytoplasm. It catalyses the reaction acetophenone + hydrogencarbonate + 2 ATP + H2O = 3-oxo-3-phenylpropanoate + 2 ADP + 2 phosphate + 2 H(+). Its activity is regulated as follows. Inhibited by zinc ions, carbamoylphosphate and beta,gamma-imido-ATP. In terms of biological role, catalyzes the carboxylation of acetophenone to form 3-oxo-3-phenylpropanoate (benzoylacetate) in the anaerobic catabolism of ethylbenzene. Also carboxylates propiophenone at the same rate and 4-acetyl-pyridine at lower rates. The protein is Acetophenone carboxylase gamma subunit (apc3) of Aromatoleum aromaticum (strain DSM 19018 / LMG 30748 / EbN1) (Azoarcus sp. (strain EbN1)).